A 179-amino-acid polypeptide reads, in one-letter code: Replication restart protein DnaT (179 aa).

A disordered region spans residues 156–179 (GGLPKRDVNTVSEPDSQIPPGFRG).

The protein belongs to the DnaT family. Homooligomerizes. Interacts with PriB. Component of the replication restart primosome. Primosome assembly occurs via a 'hand-off' mechanism. PriA binds to replication forks, subsequently PriB then DnaT bind; DnaT then displaces ssDNA to generate the helicase loading substrate.

In terms of biological role, involved in the restart of stalled replication forks, which reloads the replicative helicase on sites other than the origin of replication. Can function in multiple replication restart pathways. Displaces ssDNA from a PriB-ssDNA complex. Probably forms a spiral filament on ssDNA. The chain is Replication restart protein DnaT from Shigella boydii serotype 18 (strain CDC 3083-94 / BS512).